The primary structure comprises 85 residues: UPF0297 protein CD630_12830 (85 aa).

It belongs to the UPF0297 family.

This Clostridioides difficile (strain 630) (Peptoclostridium difficile) protein is UPF0297 protein CD630_12830.